A 326-amino-acid chain; its full sequence is MGVHILSTGSSVPNFSVENQQFEDIIETSDHWISTRTGIKKRHLAPSSTSLTKLAAEAANDALSKASINAEDIDLIILATSTPDDLFGSASQLQAEIGATSSTAFDITAACSGFIIALVTASQFIQAGSYNKVLVVGADTMSRWIDWSDRSSCILFGDGAGAVLIGESSINSILGFKLCTDGRLNSHLQLMNSPSDSQQFGLTTVPKGRYDSIRMNGKEVYKFAVFQVPIVIKNCLNDVNISIDEVDWFILHQANIRILEAIATRLSIPLSKMITNLENYGNTSAASIPLALDEAIKEKKIQPGQVVVLAGFGAGLTWGAIVLKWQ.

Catalysis depends on residues cysteine 111 and histidine 252. Residues 253–257 (QANIR) are ACP-binding. Asparagine 282 is an active-site residue.

The protein belongs to the thiolase-like superfamily. FabH family. In terms of assembly, homodimer.

Its subcellular location is the plastid. The protein localises to the chloroplast. It carries out the reaction malonyl-[ACP] + acetyl-CoA + H(+) = 3-oxobutanoyl-[ACP] + CO2 + CoA. The protein operates within lipid metabolism; fatty acid biosynthesis. Its function is as follows. Catalyzes the condensation reaction of fatty acid synthesis by the addition to an acyl acceptor of two carbons from malonyl-ACP. Catalyzes the first condensation reaction which initiates fatty acid synthesis and may therefore play a role in governing the total rate of fatty acid production. Possesses both acetoacetyl-ACP synthase and acetyl transacylase activities. Its substrate specificity determines the biosynthesis of branched-chain and/or straight-chain of fatty acids. The sequence is that of Beta-ketoacyl-[acyl-carrier-protein] synthase III from Porphyra purpurea (Red seaweed).